A 178-amino-acid chain; its full sequence is ATP synthase subunit b (178 aa).

A helical transmembrane segment spans residues 11 to 31 (IIPEPVEIVVGLVAFLLLLFV).

It belongs to the ATPase B chain family. F-type ATPases have 2 components, F(1) - the catalytic core - and F(0) - the membrane proton channel. F(1) has five subunits: alpha(3), beta(3), gamma(1), delta(1), epsilon(1). F(0) has three main subunits: a(1), b(2) and c(10-14). The alpha and beta chains form an alternating ring which encloses part of the gamma chain. F(1) is attached to F(0) by a central stalk formed by the gamma and epsilon chains, while a peripheral stalk is formed by the delta and b chains.

The protein resides in the cell membrane. F(1)F(0) ATP synthase produces ATP from ADP in the presence of a proton or sodium gradient. F-type ATPases consist of two structural domains, F(1) containing the extramembraneous catalytic core and F(0) containing the membrane proton channel, linked together by a central stalk and a peripheral stalk. During catalysis, ATP synthesis in the catalytic domain of F(1) is coupled via a rotary mechanism of the central stalk subunits to proton translocation. In terms of biological role, component of the F(0) channel, it forms part of the peripheral stalk, linking F(1) to F(0). This is ATP synthase subunit b from Saccharopolyspora erythraea (strain ATCC 11635 / DSM 40517 / JCM 4748 / NBRC 13426 / NCIMB 8594 / NRRL 2338).